The chain runs to 138 residues: ATP synthase epsilon chain (138 aa).

The protein belongs to the ATPase epsilon chain family. In terms of assembly, F-type ATPases have 2 components, CF(1) - the catalytic core - and CF(0) - the membrane proton channel. CF(1) has five subunits: alpha(3), beta(3), gamma(1), delta(1), epsilon(1). CF(0) has three main subunits: a, b and c.

The protein localises to the cell inner membrane. Functionally, produces ATP from ADP in the presence of a proton gradient across the membrane. The protein is ATP synthase epsilon chain of Ruthia magnifica subsp. Calyptogena magnifica.